We begin with the raw amino-acid sequence, 179 residues long: Peptide methionine sulfoxide reductase MsrA (179 aa).

Cysteine 14 is a catalytic residue.

This sequence belongs to the MsrA Met sulfoxide reductase family.

The enzyme catalyses L-methionyl-[protein] + [thioredoxin]-disulfide + H2O = L-methionyl-(S)-S-oxide-[protein] + [thioredoxin]-dithiol. The catalysed reaction is [thioredoxin]-disulfide + L-methionine + H2O = L-methionine (S)-S-oxide + [thioredoxin]-dithiol. Has an important function as a repair enzyme for proteins that have been inactivated by oxidation. Catalyzes the reversible oxidation-reduction of methionine sulfoxide in proteins to methionine. This is Peptide methionine sulfoxide reductase MsrA from Nitrobacter winogradskyi (strain ATCC 25391 / DSM 10237 / CIP 104748 / NCIMB 11846 / Nb-255).